The chain runs to 405 residues: Squamosa promoter-binding-like protein 6 (405 aa).

The SBP-type zinc finger occupies 121–198 (NPLCQVYGCS…AGHNERRRKP (78 aa)). 8 residues coordinate Zn(2+): Cys124, Cys129, Cys146, His149, Cys165, Cys168, His172, and Cys184. Residues 181-197 (KRSCRRRLAGHNERRRK) carry the Bipartite nuclear localization signal motif.

It depends on Zn(2+) as a cofactor.

It is found in the nucleus. In terms of biological role, trans-acting factor that binds specifically to the consensus nucleotide sequence 5'-TNCGTACAA-3'. The polypeptide is Squamosa promoter-binding-like protein 6 (SPL6) (Arabidopsis thaliana (Mouse-ear cress)).